A 1091-amino-acid polypeptide reads, in one-letter code: LRR receptor-like serine/threonine-protein kinase RGI3 (1091 aa).

A signal peptide spans 1 to 24; sequence MPPNIYRLSFFSSLLCFFFIPCFS. Residues 25 to 703 lie on the Extracellular side of the membrane; sequence LDQQGQALLS…TTRNSSVVRL (679 aa). Residues 33-56 form an LRR 1 repeat; it reads LSWKSQLNISGDAFSSWHVADTSP. Asparagine 40 is a glycosylation site (N-linked (GlcNAc...) asparagine). A disulfide bridge links cysteine 57 with cysteine 64. LRR repeat units follow at residues 67-91, 92-115, 116-140, 142-166, 168-188, 190-213, 214-237, 239-261, 262-285, 287-309, 311-332, 333-357, 359-383, 385-405, 406-429, 431-453, 454-477, 478-501, 503-524, 525-548, 549-572, 574-596, 598-620, 621-644, 645-668, and 669-690; these read RGEVSEIQLKGMDLQGSLPVTSLRS, LKSLTSLTLSSLNLTGVIPKEIGD, FTELELLDLSDNSLSGDIPVEIFRL, KLKTLSLNTNNLEGHIPMEIGNLSG, VELMLFDNKLSGEIPRSIGEL, NLQVLRAGGNKNLRGELPWEIGNC, ENLVMLGLAETSLSGKLPASIGNL, RVQTIAIYTSLLSGPIPDEIGYC, TELQNLYLYQNSISGSIPTTIGGL, KLQSLLLWQNNLVGKIPTELGNC, ELWLIDFSENLLTGTIPRSFGK, LENLQELQLSVNQISGTIPEELTNC, KLTHLEIDNNLITGEIPSLMSNLRS, TMFFAWQNKLTGNIPQSLSQC, RELQAIDLSYNSLSGSIPKEIFGL, NLTKLLLLSNDLSGFIPPDIGNC, TNLYRLRLNGNRLAGSIPSEIGNL, KNLNFVDISENRLVGSIPPAISGC, SLEFLDLHTNSLSGSLLGTTLP, KSLKFIDFSDNALSSTLPPGIGLL, TELTKLNLAKNRLSGEIPREISTC, SLQLLNLGENDFSGEIPDELGQI, SLAISLNLSCNRFVGEIPSRFSD, LKNLGVLDVSHNQLTGNLNVLTDL, QNLVSLNISYNDFSGDLPNTPFFR, and RLPLSDLASNRGLYISNAISTR. A glycan (N-linked (GlcNAc...) asparagine) is linked at asparagine 104. Asparagine 163 is a glycosylation site (N-linked (GlcNAc...) asparagine). 5 short sequence motifs (small peptide recognition) span residues 173 to 174, 195 to 198, 218 to 223, tyrosine 246, and 268 to 270; these read FD, RAGG, MLGLAE, and YLY. 2 short sequence motifs (small peptide recognition) span residues 316–319 and 338–340; these read DFSE and ELQ. Asparagine 356 is a glycosylation site (N-linked (GlcNAc...) asparagine). 2 consecutive short sequence motifs (small peptide recognition) follow at residues 386–390 and 412–415; these read MFFAW and DLSY. N-linked (GlcNAc...) asparagine glycosylation is present at asparagine 431. The Small peptide recognition signature appears at 434-438; that stretch reads KLLLL. An N-linked (GlcNAc...) asparagine glycan is attached at asparagine 452. Residues 458–460 carry the Small peptide recognition motif; sequence RLR. An N-linked (GlcNAc...) asparagine glycan is attached at asparagine 604. A glycan (N-linked (GlcNAc...) asparagine) is linked at asparagine 651. An N-linked (GlcNAc...) asparagine glycan is attached at asparagine 697. Residues 704–724 form a helical membrane-spanning segment; sequence TILILVVVTAVLVLMAVYTLV. At 725–1091 the chain is on the cytoplasmic side; it reads RARAAGKQLL…CSFAFSDDSV (367 aa). One can recognise a Protein kinase domain in the interval 760–1046; the sequence is LTSANVIGTG…MLTEIRHIDV (287 aa). ATP contacts are provided by residues 766–774 and lysine 788; that span reads IGTGSSGVV. Phosphotyrosine is present on residues tyrosine 831 and tyrosine 870. The active-site Proton acceptor is aspartate 883. At tyrosine 933 the chain carries Phosphotyrosine.

It belongs to the protein kinase superfamily. Ser/Thr protein kinase family. Binds to RGF peptides such as RGF1, GLV5/CLEL1/RGF2, GLV7/CLEL3/RGF3, GLV3/RGF4, GLV10/CLEL7/RGF5 and RGF10/CLELN; these interactions trigger the formation of heterodimers with SERK1, SERK2 or BAK1/SERK3 via LRR regions. In terms of processing, phosphorylated and ubiquitinated upon interaction with RGF1, thus leading to activation a subsequent degradation. Autophosphorylated. As to expression, expressed in roots.

Its subcellular location is the cell membrane. It catalyses the reaction L-seryl-[protein] + ATP = O-phospho-L-seryl-[protein] + ADP + H(+). The enzyme catalyses L-threonyl-[protein] + ATP = O-phospho-L-threonyl-[protein] + ADP + H(+). In terms of biological role, together with RGI1, RGI2, RGI4 and RGI5, acts as a receptor of RGF peptides (e.g. RGF1, GLV5/CLEL1/RGF2, GLV7/CLEL3/RGF3, GLV3/RGF4, GLV10/CLEL7/RGF5 and RGF10/CLELN), peptide hormones which maintain the postembryonic root stem cell niche by regulating the expression levels and patterns of the transcription factor PLETHORA (PLT, e.g. PLT1 and PLT2). Links RGF peptides signal with their downstream components. This is LRR receptor-like serine/threonine-protein kinase RGI3 from Arabidopsis thaliana (Mouse-ear cress).